Here is a 338-residue protein sequence, read N- to C-terminus: Aspartate-semialdehyde dehydrogenase (338 aa).

NADP(+)-binding positions include 13-16 (SGAV) and 41-42 (RS). Arg101 is a phosphate binding site. The active-site Acyl-thioester intermediate is the Cys132. Gln159 is a substrate binding site. 162-163 (SG) is a binding site for NADP(+). Lys216 contacts phosphate. Residue Arg238 participates in substrate binding. His245 serves as the catalytic Proton acceptor. Asn317 contacts NADP(+).

The protein belongs to the aspartate-semialdehyde dehydrogenase family. As to quaternary structure, homodimer.

It catalyses the reaction L-aspartate 4-semialdehyde + phosphate + NADP(+) = 4-phospho-L-aspartate + NADPH + H(+). It participates in amino-acid biosynthesis; L-lysine biosynthesis via DAP pathway; (S)-tetrahydrodipicolinate from L-aspartate: step 2/4. It functions in the pathway amino-acid biosynthesis; L-methionine biosynthesis via de novo pathway; L-homoserine from L-aspartate: step 2/3. Its pathway is amino-acid biosynthesis; L-threonine biosynthesis; L-threonine from L-aspartate: step 2/5. Catalyzes the NADPH-dependent formation of L-aspartate-semialdehyde (L-ASA) by the reductive dephosphorylation of L-aspartyl-4-phosphate. The sequence is that of Aspartate-semialdehyde dehydrogenase from Shewanella violacea (strain JCM 10179 / CIP 106290 / LMG 19151 / DSS12).